The chain runs to 37 residues: Large ribosomal subunit protein bL36 (37 aa).

Belongs to the bacterial ribosomal protein bL36 family.

This chain is Large ribosomal subunit protein bL36, found in Nitratidesulfovibrio vulgaris (strain ATCC 29579 / DSM 644 / CCUG 34227 / NCIMB 8303 / VKM B-1760 / Hildenborough) (Desulfovibrio vulgaris).